The chain runs to 881 residues: Phosphoenolpyruvate carboxylase (881 aa).

Catalysis depends on residues H142 and K547.

It belongs to the PEPCase type 1 family. Requires Mg(2+) as cofactor.

It carries out the reaction oxaloacetate + phosphate = phosphoenolpyruvate + hydrogencarbonate. Forms oxaloacetate, a four-carbon dicarboxylic acid source for the tricarboxylic acid cycle. In Hahella chejuensis (strain KCTC 2396), this protein is Phosphoenolpyruvate carboxylase.